We begin with the raw amino-acid sequence, 113 residues long: Protein FMC1 homolog (113 aa).

The tract at residues 94 to 113 is disordered; sequence SAGLVGLQLPHQPGGKGWEP.

It belongs to the FMC1 family. In terms of assembly, interacts with ATPAF2.

The protein resides in the mitochondrion. In terms of biological role, plays a role in the assembly/stability of the mitochondrial membrane ATP synthase (F(1)F(0) ATP synthase or Complex V). The protein is Protein FMC1 homolog of Rattus norvegicus (Rat).